Here is a 543-residue protein sequence, read N- to C-terminus: Zinc finger protein tra-4 (543 aa).

Residues 1 to 38 (MDDPNQCTIKQEDSITRPRPTEAPTIQNLKQEPAIEEG) are disordered. Positions 10–20 (KQEDSITRPRP) are enriched in basic and acidic residues. 7 consecutive C2H2-type zinc fingers follow at residues 218-241 (VRCK…RDKH), 327-350 (PQCP…AKKH), 381-406 (YVCF…KKFH), 413-436 (FRCS…KMSH), 442-464 (FQCH…ERMH), 470-493 (FECK…RDEH), and 495-518 (YVCA…YEEH).

It belongs to the krueppel C2H2-type zinc-finger protein family. As to quaternary structure, interacts with histone deacetylase hda-1. May interact with nasp-1.

Its subcellular location is the nucleus. Functionally, probable transcription factor. Promotes normal hermaphrodite (XX) development, in concert with histone deacetylase hda-1 and nasp-1, perhaps as components of a complex. May cooperate with transcription factor tra-1 to repress male-specific genes in hermaphrodites. Synthetic multivulva (synMuv) class B protein, required to repress the induction of vulval development by let-60 Ras signaling. This is Zinc finger protein tra-4 from Caenorhabditis elegans.